The sequence spans 76 residues: Putative snRNP Sm-like protein (76 aa).

Residues 4 to 76 form the Sm domain; the sequence is RPLDVIHKSL…VLAISPTEEG (73 aa).

It belongs to the snRNP Sm proteins family.

This chain is Putative snRNP Sm-like protein, found in Pyrococcus furiosus (strain ATCC 43587 / DSM 3638 / JCM 8422 / Vc1).